Here is a 511-residue protein sequence, read N- to C-terminus: Glucans biosynthesis protein G (511 aa).

The first 22 residues, 1 to 22, serve as a signal peptide directing secretion; the sequence is MMKMRWLSAAVMLTLYTSSSWA.

It belongs to the OpgD/OpgG family.

Its subcellular location is the periplasm. The protein operates within glycan metabolism; osmoregulated periplasmic glucan (OPG) biosynthesis. In terms of biological role, involved in the biosynthesis of osmoregulated periplasmic glucans (OPGs). This is Glucans biosynthesis protein G from Escherichia coli O8 (strain IAI1).